A 40-amino-acid polypeptide reads, in one-letter code: Photosystem II reaction center protein J (40 aa).

A helical transmembrane segment spans residues I8 to F28.

It belongs to the PsbJ family. As to quaternary structure, PSII is composed of 1 copy each of membrane proteins PsbA, PsbB, PsbC, PsbD, PsbE, PsbF, PsbH, PsbI, PsbJ, PsbK, PsbL, PsbM, PsbT, PsbX, PsbY, PsbZ, Psb30/Ycf12, at least 3 peripheral proteins of the oxygen-evolving complex and a large number of cofactors. It forms dimeric complexes.

It is found in the plastid. Its subcellular location is the cyanelle thylakoid membrane. Its function is as follows. One of the components of the core complex of photosystem II (PSII). PSII is a light-driven water:plastoquinone oxidoreductase that uses light energy to abstract electrons from H(2)O, generating O(2) and a proton gradient subsequently used for ATP formation. It consists of a core antenna complex that captures photons, and an electron transfer chain that converts photonic excitation into a charge separation. The polypeptide is Photosystem II reaction center protein J (Cyanophora paradoxa).